The following is a 940-amino-acid chain: Beta-mannosidase A (940 aa).

The first 21 residues, 1–21 (MHFHGIATQAVLASNITTGSG), serve as a signal peptide directing secretion. Asn15, Asn39, Asn79, Asn245, Asn314, Asn321, and Asn344 each carry an N-linked (GlcNAc...) asparagine glycan. Glu476 acts as the Proton donor in catalysis. N-linked (GlcNAc...) asparagine glycans are attached at residues Asn534, Asn605, Asn626, Asn653, Asn733, Asn761, and Asn785.

The protein belongs to the glycosyl hydrolase 2 family. Beta-mannosidase A subfamily. Homodimer.

The protein resides in the secreted. The enzyme catalyses Hydrolysis of terminal, non-reducing beta-D-mannose residues in beta-D-mannosides.. Its pathway is glycan metabolism; N-glycan degradation. In terms of biological role, exoglycosidase that cleaves the single beta-linked mannose residue from the non-reducing end of beta-mannosidic oligosaccharides of various complexity and length. Involved in the degradation of polymeric mannan and galactomannan. This chain is Beta-mannosidase A (mndA), found in Emericella nidulans (strain FGSC A4 / ATCC 38163 / CBS 112.46 / NRRL 194 / M139) (Aspergillus nidulans).